A 351-amino-acid polypeptide reads, in one-letter code: MASGRLIKLVIFELLEFAAFSIPTLVIMEQFATAYQRTRNASEKTHYWLIVSCSIAYVAVVSLLIWVPVKVLLHKKRHLYKKIKGWRPVMMMCVVLTTLPSFIFSIAVTEVQKTINTTVDVLPDTLPDLPVSLVISSLIITDIIEKLRFHPIRGYQKSNEDKHIHTSSLQQVRTVTEQVRQNGENAASPCAASPSETWQPPGALTHSAVPMFAGPQEPFFGSGILKTMSRRDVRAEIFLWSFLLWSDTIEMVRVAGHPNVYKTNWLYPVYLFSFISLLRIIFTPQNPLLSCLGILLQDLPFVFVRLSLIIALGTITPVLGLCKNVLVTLSYVYFNFLTRFRAFSNFELSPF.

3 helical membrane-spanning segments follow: residues 9 to 29 (LVIFELLEFAAFSIPTLVIME), 49 to 69 (LIVSCSIAYVAVVSLLIWVPV), and 88 to 108 (PVMMMCVVLTTLPSFIFSIAV). An N-linked (GlcNAc...) asparagine glycan is attached at asparagine 116. 3 helical membrane-spanning segments follow: residues 121 to 141 (VLPDTLPDLPVSLVISSLIIT), 264 to 284 (NWLYPVYLFSFISLLRIIFTP), and 301 to 321 (FVFVRLSLIIALGTITPVLGL).

The protein belongs to the TMEM236 family. In terms of tissue distribution, intestine.

It localises to the membrane. The protein is Transmembrane protein 236 (TMEM236) of Oryctolagus cuniculus (Rabbit).